We begin with the raw amino-acid sequence, 162 residues long: UPF0460 protein y4xD (162 aa).

This sequence belongs to the UPF0460 family.

The chain is UPF0460 protein y4xD from Sinorhizobium fredii (strain NBRC 101917 / NGR234).